A 538-amino-acid chain; its full sequence is Probable bifunctional tRNA threonylcarbamoyladenosine biosynthesis protein (538 aa).

Residues 1-327 (MIVLICLGIE…FRTDEVEAPW (327 aa)) are kae1. Residues histidine 111, histidine 115, and tyrosine 132 each coordinate Fe cation. L-threonylcarbamoyladenylate contacts are provided by residues 132 to 136 (YVSGG), aspartate 164, glycine 177, glutamate 181, and asparagine 260. Aspartate 288 is a Fe cation binding site. Positions 336-538 (KLPDNLIAKG…EIESRGRYTH (203 aa)) constitute a Protein kinase domain. ATP is bound by residues 342–350 (IAKGAESDI) and lysine 363. Aspartate 452 functions as the Proton acceptor; for kinase activity in the catalytic mechanism.

This sequence in the N-terminal section; belongs to the KAE1 / TsaD family. It in the C-terminal section; belongs to the protein kinase superfamily. Tyr protein kinase family. BUD32 subfamily. Component of the KEOPS complex that consists of Kae1, Bud32, Cgi121 and Pcc1; the whole complex dimerizes. Fe(2+) is required as a cofactor.

The protein localises to the cytoplasm. The enzyme catalyses L-seryl-[protein] + ATP = O-phospho-L-seryl-[protein] + ADP + H(+). It carries out the reaction L-threonyl-[protein] + ATP = O-phospho-L-threonyl-[protein] + ADP + H(+). The catalysed reaction is L-threonylcarbamoyladenylate + adenosine(37) in tRNA = N(6)-L-threonylcarbamoyladenosine(37) in tRNA + AMP + H(+). Functionally, required for the formation of a threonylcarbamoyl group on adenosine at position 37 (t(6)A37) in tRNAs that read codons beginning with adenine. Is a component of the KEOPS complex that is probably involved in the transfer of the threonylcarbamoyl moiety of threonylcarbamoyl-AMP (TC-AMP) to the N6 group of A37. The Kae1 domain likely plays a direct catalytic role in this reaction. The Bud32 domain probably displays kinase activity that regulates Kae1 function. The sequence is that of Probable bifunctional tRNA threonylcarbamoyladenosine biosynthesis protein from Methanobrevibacter smithii (strain ATCC 35061 / DSM 861 / OCM 144 / PS).